The sequence spans 405 residues: Nuclear hormone receptor family member nhr-199 (405 aa).

The segment at residues 20–111 (IPYCLICSEV…MGMQRSSVQQ (92 aa)) is a DNA-binding region (nuclear receptor). 2 consecutive NR C4-type zinc fingers follow at residues 23–44 (CLIC…CRAC) and 60–94 (CGRN…CKAC). The NR LBD domain occupies 126 to 376 (RGKPVLNKLR…PFSRIHGNQK (251 aa)).

This sequence belongs to the nuclear hormone receptor family.

The protein resides in the nucleus. In terms of biological role, orphan nuclear receptor. The chain is Nuclear hormone receptor family member nhr-199 (nhr-199) from Caenorhabditis elegans.